Reading from the N-terminus, the 622-residue chain is uncharacterized protein (622 aa).

The [4Fe-4S] cluster site is built by C302, C306, C310, and C521.

The protein belongs to the AOR/FOR family. It depends on [4Fe-4S] cluster as a cofactor.

This is an uncharacterized protein from Methanocaldococcus jannaschii (strain ATCC 43067 / DSM 2661 / JAL-1 / JCM 10045 / NBRC 100440) (Methanococcus jannaschii).